A 406-amino-acid chain; its full sequence is MKIYLVGGAVRDRLLQRPAGDHDWVVVGATPAQMEAQGYTAVGRDFPVFLHPKTGEEYALARTERKSGRGYRGFVVDADPGVTLEEDLQRRDFTINAIACDEETGTLVDPYGGVRDIEQRVLRHVGPAFVEDPLRVLRAARFMARFAPLGFTVAEETMALMREIAASGELDALVPERVWQELRKALVSERPSAFLRTLHDAHALGPILPELEALYGVPQRAEFHPEVDTGIHQEMVSDMAAKLAPGDDLVGFAALTHDLGKGLTPPEEWPRHIMHEQRGIKPLKALCARLKIPAEHQQLAEAVCREHLNVHRIDELRDATVLELLGRCDALRRPERVARIALCCEADKRGRLGFEDADYPQGETLKRLHQAALSVQARDLDTTHLKGPAIGEALAKARVKAIAAAR.

Residues Gly-8 and Arg-11 each contribute to the ATP site. Residues Gly-8 and Arg-11 each contribute to the CTP site. Mg(2+) contacts are provided by Asp-21 and Asp-23. Residues Arg-91, Arg-138, and Arg-141 each coordinate ATP. Arg-91, Arg-138, and Arg-141 together coordinate CTP. One can recognise an HD domain in the interval 229–331 (TGIHQEMVSD…LELLGRCDAL (103 aa)).

The protein belongs to the tRNA nucleotidyltransferase/poly(A) polymerase family. Bacterial CCA-adding enzyme type 1 subfamily. Monomer. Can also form homodimers and oligomers. Requires Mg(2+) as cofactor. The cofactor is Ni(2+).

It catalyses the reaction a tRNA precursor + 2 CTP + ATP = a tRNA with a 3' CCA end + 3 diphosphate. It carries out the reaction a tRNA with a 3' CCA end + 2 CTP + ATP = a tRNA with a 3' CCACCA end + 3 diphosphate. In terms of biological role, catalyzes the addition and repair of the essential 3'-terminal CCA sequence in tRNAs without using a nucleic acid template. Adds these three nucleotides in the order of C, C, and A to the tRNA nucleotide-73, using CTP and ATP as substrates and producing inorganic pyrophosphate. tRNA 3'-terminal CCA addition is required both for tRNA processing and repair. Also involved in tRNA surveillance by mediating tandem CCA addition to generate a CCACCA at the 3' terminus of unstable tRNAs. While stable tRNAs receive only 3'-terminal CCA, unstable tRNAs are marked with CCACCA and rapidly degraded. In Stenotrophomonas maltophilia (strain K279a), this protein is Multifunctional CCA protein.